The sequence spans 472 residues: Cell division protein FtsP (472 aa).

The tat-type signal signal peptide spans 1-27 (MSLSRRQFIQASGIALCAGAMPLTARA).

The protein belongs to the FtsP family. Predicted to be exported by the Tat system. The position of the signal peptide cleavage has not been experimentally proven.

The protein resides in the periplasm. Functionally, cell division protein that is required for growth during stress conditions. May be involved in protecting or stabilizing the divisomal assembly under conditions of stress. This is Cell division protein FtsP from Dickeya dadantii (strain 3937) (Erwinia chrysanthemi (strain 3937)).